Consider the following 90-residue polypeptide: Elongation factor 1-beta (90 aa).

It belongs to the EF-1-beta/EF-1-delta family.

In terms of biological role, promotes the exchange of GDP for GTP in EF-1-alpha/GDP, thus allowing the regeneration of EF-1-alpha/GTP that could then be used to form the ternary complex EF-1-alpha/GTP/AAtRNA. The polypeptide is Elongation factor 1-beta (ef1b) (Aeropyrum pernix (strain ATCC 700893 / DSM 11879 / JCM 9820 / NBRC 100138 / K1)).